A 525-amino-acid polypeptide reads, in one-letter code: Cytochrome P450 monooxygenase ltmJ (525 aa).

Residues L21 to N43 form a helical membrane-spanning segment. N136 carries N-linked (GlcNAc...) asparagine glycosylation. C465 is a heme binding site.

It belongs to the cytochrome P450 family. Heme serves as cofactor.

The protein resides in the membrane. It participates in secondary metabolite biosynthesis. In terms of biological role, cytochrome P450 monooxygenase; part of the gene clusters that mediates the biosynthesis of lolitrems, indole-diterpene mycotoxins that are potent tremorgens in mammals, and are synthesized by clavicipitaceous fungal endophytes in association with their grass hosts. The geranylgeranyl diphosphate (GGPP) synthase ltmG is proposed to catalyze the first step in lolitrem biosynthesis. LtmG catalyzes a series of iterative condensations of isopentenyl diphosphate (IPP) with dimethylallyl diphosphate (DMAPP), geranyl diphosphate (GPP), and farnesyl diphosphate (FPP), to form GGPP. GGPP then condenses with indole-3-glycerol phosphate to form 3-geranylgeranylindole, an acyclic intermediate, to be incorporated into paxilline. Either ltmG or ltmC could be responsible for this step, as both are putative prenyl transferases. The FAD-dependent monooxygenase ltmM then catalyzes the epoxidation of the two terminal alkenes of the geranylgeranyl moiety, which is subsequently cyclized by ltmB, to paspaline. The cytochrome P450 monooxygenases ltmQ and ltmP can sequentially oxidize paspaline to terpendole E and terpendole F. Alternatively, ltmP converts paspaline to an intermediate which is oxidized by ltmQ to terpendole F. LtmF, ltmK, ltmE and ltmJ appear to be unique to the epichloe endophytes. The prenyltransferase ltmF is involved in the 27-hydroxyl-O-prenylation. The cytochrome P450 monooxygenase ltmK is required for the oxidative acetal ring formation. The multi-functional prenyltransferase ltmE is required for C20- and C21-prenylations of the indole ring of paspalanes and acts together with the cytochrome P450 monooxygenase ltmJ to yield lolitremanes by multiple oxidations and ring closures. The stereoisomer pairs of lolitriol and lolitrem N or lolitrem B and lolitrem F may be attributed to variations in the way in which ring closure can occur under the action of ltmJ. While the major product of this pathway is lolitrem B, the prenyl transferases and cytochrome P450 monooxygenases identified in this pathway have a remarkable versatility in their regio- and stereo-specificities to generate a diverse range of metabolites that are products of a metabolic grid rather than a linear pathway. The chain is Cytochrome P450 monooxygenase ltmJ (ltmJ) from Epichloe festucae var. lolii (Neotyphodium lolii).